We begin with the raw amino-acid sequence, 157 residues long: ATP synthase subunit b (157 aa).

A helical transmembrane segment spans residues 11–31 (LIMFAMFTWFCMKFIWPPIVM).

The protein belongs to the ATPase B chain family. As to quaternary structure, F-type ATPases have 2 components, F(1) - the catalytic core - and F(0) - the membrane proton channel. F(1) has five subunits: alpha(3), beta(3), gamma(1), delta(1), epsilon(1). F(0) has three main subunits: a(1), b(2) and c(10-14). The alpha and beta chains form an alternating ring which encloses part of the gamma chain. F(1) is attached to F(0) by a central stalk formed by the gamma and epsilon chains, while a peripheral stalk is formed by the delta and b chains.

The protein localises to the cell inner membrane. Functionally, f(1)F(0) ATP synthase produces ATP from ADP in the presence of a proton or sodium gradient. F-type ATPases consist of two structural domains, F(1) containing the extramembraneous catalytic core and F(0) containing the membrane proton channel, linked together by a central stalk and a peripheral stalk. During catalysis, ATP synthesis in the catalytic domain of F(1) is coupled via a rotary mechanism of the central stalk subunits to proton translocation. Its function is as follows. Component of the F(0) channel, it forms part of the peripheral stalk, linking F(1) to F(0). This chain is ATP synthase subunit b, found in Vesicomyosocius okutanii subsp. Calyptogena okutanii (strain HA).